The primary structure comprises 282 residues: tRNA (guanine-N(1)-)-methyltransferase (282 aa).

S-adenosyl-L-methionine contacts are provided by residues Gly-157 and 177–182 (VGDYIL).

The protein belongs to the RNA methyltransferase TrmD family. In terms of assembly, homodimer.

Its subcellular location is the cytoplasm. The enzyme catalyses guanosine(37) in tRNA + S-adenosyl-L-methionine = N(1)-methylguanosine(37) in tRNA + S-adenosyl-L-homocysteine + H(+). Its function is as follows. Specifically methylates guanosine-37 in various tRNAs. The sequence is that of tRNA (guanine-N(1)-)-methyltransferase from Rickettsia bellii (strain RML369-C).